The following is a 399-amino-acid chain: ATP-dependent RNA helicase FAL1 (399 aa).

A Q motif motif is present at residues 23 to 51; the sequence is PTFESMNLKDDLLRGIYGYGFEAPSAIQS. The 174-residue stretch at 54 to 227 folds into the Helicase ATP-binding domain; that stretch reads ITQIISGTDV…KKFMSDPVKI (174 aa). ATP is bound at residue 67-74; the sequence is AQSGTGKT. Residues 173-176 carry the DEAD box motif; that stretch reads DEAD. Positions 238–399 constitute a Helicase C-terminal domain; the sequence is GIKQYYVNVE…PVPADLSTIS (162 aa).

The protein belongs to the DEAD box helicase family. DDX48/FAL1 subfamily.

Its subcellular location is the nucleus. It is found in the nucleolus. The catalysed reaction is ATP + H2O = ADP + phosphate + H(+). In terms of biological role, ATP-dependent RNA helicase involved in 40S ribosomal subunit biogenesis. Required for the processing and cleavage of 35S pre-rRNA at sites A0, A1, and A2, leading to mature 18S rRNA. This chain is ATP-dependent RNA helicase FAL1 (FAL1), found in Vanderwaltozyma polyspora (strain ATCC 22028 / DSM 70294 / BCRC 21397 / CBS 2163 / NBRC 10782 / NRRL Y-8283 / UCD 57-17) (Kluyveromyces polysporus).